The primary structure comprises 99 residues: Seminal vesicle secretory protein 6 (99 aa).

Positions 1-21 (MSPTSFFLLTMLLVLVTETAA) are cleaved as a signal peptide.

This sequence belongs to the SVP2/SVP5/SVP6 family. As to expression, testis.

Its subcellular location is the secreted. It localises to the extracellular space. In Mus musculus (Mouse), this protein is Seminal vesicle secretory protein 6 (Svs6).